The sequence spans 163 residues: Lipoprotein signal peptidase (163 aa).

Helical transmembrane passes span 4-24 (SAALFCRPVPAILFILSLLIL), 66-86 (LDAWVIVVMRLAIVAFVAWLW), and 92-112 (DHQFAHLGYCLIIAGAFGNII). Residues aspartate 122 and aspartate 140 contribute to the active site. A helical membrane pass occupies residues 132–152 (SFAVFNLADSLITIGAGFILL).

The protein belongs to the peptidase A8 family.

It is found in the cell inner membrane. The enzyme catalyses Release of signal peptides from bacterial membrane prolipoproteins. Hydrolyzes -Xaa-Yaa-Zaa-|-(S,diacylglyceryl)Cys-, in which Xaa is hydrophobic (preferably Leu), and Yaa (Ala or Ser) and Zaa (Gly or Ala) have small, neutral side chains.. Its pathway is protein modification; lipoprotein biosynthesis (signal peptide cleavage). This protein specifically catalyzes the removal of signal peptides from prolipoproteins. The chain is Lipoprotein signal peptidase from Allorhizobium ampelinum (strain ATCC BAA-846 / DSM 112012 / S4) (Agrobacterium vitis (strain S4)).